Here is a 151-residue protein sequence, read N- to C-terminus: uncharacterized protein (151 aa).

The disordered stretch occupies residues 122–151 (GVAQRQVPTTGTHSFFHCTSEGNKEKPHHF).

This is an uncharacterized protein from Homo sapiens (Human).